Consider the following 1008-residue polypeptide: DNA polymerase (1008 aa).

The protein belongs to the DNA polymerase type-B family. Interacts with A20. Component of the Uracil-DNA glycosylase(UDG)-A20-polymerase complex; A20 and UDG form a heterodimeric processivity factor that associates with E9 to form the processive polymerase holoenzyme.

It catalyses the reaction DNA(n) + a 2'-deoxyribonucleoside 5'-triphosphate = DNA(n+1) + diphosphate. Catalyzes DNA synthesis. Acquires processivity by associating with a heterodimeric processivity factor comprised of the viral A20 and D4 proteins, thereby forming the DNA polymerase holoenzyme. Displays 3'- to 5' exonuclease activity. Might participate in viral DNA recombination. Does not perform translesion synthesis across an abasic site. In Capra hircus (Goat), this protein is DNA polymerase (POL).